Here is a 328-residue protein sequence, read N- to C-terminus: Phenylalanine--tRNA ligase alpha subunit (328 aa).

Position 245 (Glu-245) interacts with Mg(2+).

It belongs to the class-II aminoacyl-tRNA synthetase family. Phe-tRNA synthetase alpha subunit type 1 subfamily. Tetramer of two alpha and two beta subunits. Mg(2+) serves as cofactor.

The protein resides in the cytoplasm. The enzyme catalyses tRNA(Phe) + L-phenylalanine + ATP = L-phenylalanyl-tRNA(Phe) + AMP + diphosphate + H(+). This Helicobacter pylori (strain P12) protein is Phenylalanine--tRNA ligase alpha subunit.